The sequence spans 356 residues: Fructose-bisphosphate aldolase 1, chloroplastic (356 aa).

The transit peptide at 1–6 (GLTIRA) directs the protein to the chloroplast. Positions 53 and 143 each coordinate substrate. Residue E183 is the Proton acceptor of the active site. K225 functions as the Schiff-base intermediate with dihydroxyacetone-P in the catalytic mechanism.

The protein belongs to the class I fructose-bisphosphate aldolase family.

The protein localises to the plastid. It localises to the chloroplast. The catalysed reaction is beta-D-fructose 1,6-bisphosphate = D-glyceraldehyde 3-phosphate + dihydroxyacetone phosphate. Its pathway is carbohydrate degradation; glycolysis; D-glyceraldehyde 3-phosphate and glycerone phosphate from D-glucose: step 4/4. The protein is Fructose-bisphosphate aldolase 1, chloroplastic of Pisum sativum (Garden pea).